The following is a 389-amino-acid chain: Lipid-A-disaccharide synthase (389 aa).

Belongs to the LpxB family.

The catalysed reaction is a lipid X + a UDP-2-N,3-O-bis[(3R)-3-hydroxyacyl]-alpha-D-glucosamine = a lipid A disaccharide + UDP + H(+). The protein operates within bacterial outer membrane biogenesis; LPS lipid A biosynthesis. In terms of biological role, condensation of UDP-2,3-diacylglucosamine and 2,3-diacylglucosamine-1-phosphate to form lipid A disaccharide, a precursor of lipid A, a phosphorylated glycolipid that anchors the lipopolysaccharide to the outer membrane of the cell. In Burkholderia multivorans (strain ATCC 17616 / 249), this protein is Lipid-A-disaccharide synthase.